The chain runs to 284 residues: 2-dehydro-3-deoxyphosphooctonate aldolase (284 aa).

This sequence belongs to the KdsA family.

It is found in the cytoplasm. The enzyme catalyses D-arabinose 5-phosphate + phosphoenolpyruvate + H2O = 3-deoxy-alpha-D-manno-2-octulosonate-8-phosphate + phosphate. Its pathway is carbohydrate biosynthesis; 3-deoxy-D-manno-octulosonate biosynthesis; 3-deoxy-D-manno-octulosonate from D-ribulose 5-phosphate: step 2/3. It functions in the pathway bacterial outer membrane biogenesis; lipopolysaccharide biosynthesis. The polypeptide is 2-dehydro-3-deoxyphosphooctonate aldolase (Sodalis glossinidius (strain morsitans)).